We begin with the raw amino-acid sequence, 324 residues long: Glyoxylate/hydroxypyruvate reductase B (324 aa).

Catalysis depends on residues Arg-237 and Glu-266. His-285 serves as the catalytic Proton donor.

This sequence belongs to the D-isomer specific 2-hydroxyacid dehydrogenase family. GhrB subfamily. As to quaternary structure, homodimer.

It localises to the cytoplasm. The catalysed reaction is glycolate + NADP(+) = glyoxylate + NADPH + H(+). It catalyses the reaction (R)-glycerate + NAD(+) = 3-hydroxypyruvate + NADH + H(+). The enzyme catalyses (R)-glycerate + NADP(+) = 3-hydroxypyruvate + NADPH + H(+). Catalyzes the NADPH-dependent reduction of glyoxylate and hydroxypyruvate into glycolate and glycerate, respectively. The sequence is that of Glyoxylate/hydroxypyruvate reductase B from Salmonella gallinarum (strain 287/91 / NCTC 13346).